Consider the following 328-residue polypeptide: 4-hydroxythreonine-4-phosphate dehydrogenase (328 aa).

Substrate contacts are provided by His134 and Thr135. The a divalent metal cation site is built by His164, His209, and His265. Substrate is bound by residues Lys273, Asn282, and Arg291.

It belongs to the PdxA family. As to quaternary structure, homodimer. It depends on Zn(2+) as a cofactor. The cofactor is Mg(2+). Co(2+) is required as a cofactor.

It localises to the cytoplasm. The enzyme catalyses 4-(phosphooxy)-L-threonine + NAD(+) = 3-amino-2-oxopropyl phosphate + CO2 + NADH. The protein operates within cofactor biosynthesis; pyridoxine 5'-phosphate biosynthesis; pyridoxine 5'-phosphate from D-erythrose 4-phosphate: step 4/5. Its function is as follows. Catalyzes the NAD(P)-dependent oxidation of 4-(phosphooxy)-L-threonine (HTP) into 2-amino-3-oxo-4-(phosphooxy)butyric acid which spontaneously decarboxylates to form 3-amino-2-oxopropyl phosphate (AHAP). The polypeptide is 4-hydroxythreonine-4-phosphate dehydrogenase (Vibrio vulnificus (strain YJ016)).